We begin with the raw amino-acid sequence, 438 residues long: MLNARPWVPEGPEEYMQALAKRFAGQTPDQNERDLLAFVEENRVIHERDCFNLNPATNAINPKAEAMLASGVGSRPSLGYPGDKYEMGLEGVEKIEVLAAELVAEVFGAKYAELRVASGALANLYAYMIAAKPGDTVFVPSATIGGHFSHHANGAAGMYGVNSYLMPFDADKYTVDVDRLREDARRLKPKMITLGNSLNLFPHPIKEVREIADEIGALVLFDAAHLCGLIAGHSWQQPLEEGAHLMTLSTYKSLAGPAGGLIVTNDAEVAKRLDTVAYPGMTANFDSARSASIAMTMLDWQVYGREYAAEMVRTSKAFAEALVKEGLPVFARDRGITTSHQFAIEAHDFGGGQAMAKLLRRANILACGIGLPLPEIAGDVNGLRMGTPELVRWGMRSEHMPQLAKFIADVLLGRQVPEEVAPAVTDYRRQFNKLHFLR.

An N6-(pyridoxal phosphate)lysine modification is found at K252.

The protein belongs to the SHMT family. Alpha-methylserine aldolase subfamily. In terms of assembly, homodimer. It depends on pyridoxal 5'-phosphate as a cofactor.

The catalysed reaction is 2-methyl-L-serine = formaldehyde + L-alanine. Its activity is regulated as follows. In the alpha-methyl-L-serine synthesis reaction, activity is inhibited by an excess amount of formaldehyde (at a concentration greater than 10 mM). Functionally, catalyzes the reversible interconversion of alpha-methyl-L-serine to L-alanine and formaldehyde. Cannot use alpha-methyl-D-serine, L-serine or D-serine. Cannot use D-alanine instead of L-alanine as the substrate for alpha-methyl-L-serine synthesis. Does not require tetrahydrofolate (THF) for activity. The polypeptide is Alpha-methylserine aldolase (Ralstonia sp).